We begin with the raw amino-acid sequence, 447 residues long: Phosphoglucosamine mutase (447 aa).

The active-site Phosphoserine intermediate is Ser103. Residues Ser103, Asp242, Asp244, and Asp246 each contribute to the Mg(2+) site. At Ser103 the chain carries Phosphoserine.

It belongs to the phosphohexose mutase family. Mg(2+) is required as a cofactor. Activated by phosphorylation.

It carries out the reaction alpha-D-glucosamine 1-phosphate = D-glucosamine 6-phosphate. Functionally, catalyzes the conversion of glucosamine-6-phosphate to glucosamine-1-phosphate. The sequence is that of Phosphoglucosamine mutase from Marinobacter nauticus (strain ATCC 700491 / DSM 11845 / VT8) (Marinobacter aquaeolei).